The primary structure comprises 232 residues: Large ribosomal subunit protein uL1 (232 aa).

It belongs to the universal ribosomal protein uL1 family. As to quaternary structure, part of the 50S ribosomal subunit.

In terms of biological role, binds directly to 23S rRNA. The L1 stalk is quite mobile in the ribosome, and is involved in E site tRNA release. Functionally, protein L1 is also a translational repressor protein, it controls the translation of the L11 operon by binding to its mRNA. This Porphyromonas gingivalis (strain ATCC 33277 / DSM 20709 / CIP 103683 / JCM 12257 / NCTC 11834 / 2561) protein is Large ribosomal subunit protein uL1.